Consider the following 600-residue polypeptide: Protein GPR107 (600 aa).

The signal sequence occupies residues 1–39; sequence MAALAPVGSPASRGPRLAAGLRLLPMLGLLQLLAEPGLG. At 40–263 the chain is on the extracellular side; it reads RVHHLALKDD…YLSAGEIPLP (224 aa). Asparagine 70 and asparagine 169 each carry an N-linked (GlcNAc...) asparagine glycan. A disulfide bridge connects residues cysteine 109 and cysteine 228. Residues 157-175 are compositionally biased toward polar residues; the sequence is SQEPNVNPASAGNQTQKTQ. Residues 157 to 185 form a disordered region; that stretch reads SQEPNVNPASAGNQTQKTQDGGKSKRSTV. Over residues 176–185 the composition is skewed to basic and acidic residues; the sequence is DGGKSKRSTV. Asparagine 211 is a glycosylation site (N-linked (GlcNAc...) asparagine). The helical transmembrane segment at 264–284 threads the bilayer; the sequence is KLYISMAFFFFLSGTIWIHIL. Topologically, residues 285-293 are cytoplasmic; sequence RKRRNDVFK. Residues 294 to 314 form a helical membrane-spanning segment; it reads IHWLMAALPFTKSLSLVFHAI. Topologically, residues 315–337 are extracellular; it reads DYHYISSQGFPIEGWAVVYYITH. Residues 338-358 form a helical membrane-spanning segment; sequence LLKGALLFITIALIGTGWAFI. Residues 359–368 lie on the Cytoplasmic side of the membrane; sequence KHILSDKDKK. A helical membrane pass occupies residues 369–389; the sequence is IFMIVIPLQVLANVAYIIIES. The Extracellular portion of the chain corresponds to 390–402; it reads TEEGTTEYGLWKD. The chain crosses the membrane as a helical span at residues 403 to 423; it reads SLFLVDLLCCGAILFPVVWSI. At 424–498 the chain is on the cytoplasmic side; sequence RHLQEASATD…AKLKLFRHYY (75 aa). The helical transmembrane segment at 499 to 519 threads the bilayer; sequence VLIVCYIYFTRIIAFLLKLAV. Topologically, residues 520 to 524 are extracellular; it reads PFQWK. Residues 525–544 form a helical membrane-spanning segment; sequence WLYQLLDETATLVFFVLTGY. Residues 545 to 600 lie on the Cytoplasmic side of the membrane; the sequence is KFRPASDNPYLQLSQEEEDLEMESVVTTSGVMESMKKVKKVTNGSVEPQGEWEGAV.

The protein belongs to the LU7TM family. In terms of processing, cleaved by FURIN to yield two fragments of 17 and 35 kDa that remain associated via a disulfide bond.

Its subcellular location is the cell membrane. It is found in the golgi apparatus. It localises to the trans-Golgi network membrane. Its function is as follows. Has been proposed to act as a receptor for neuronostatin, a peptide derived from the somatostatin/SST precursor. Involved in blood sugar regulation through the induction of glucagon in response to low glucose. In terms of biological role, (Microbial infection) Required for intoxication by Pseudomonas aeruginosa exotoxin A and Campylobacter jejuni CDT. May contribute to the retrograde transport of bacterial toxins, including cholera toxin, from the trans-Golgi network to the endoplasmic reticulum. The protein is Protein GPR107 (GPR107) of Homo sapiens (Human).